The following is a 314-amino-acid chain: MPRTDNDSWDITQSVGATALGVAAARAAETESENPLISDPFARIFVEAAGKGMWSIYADPALLTKADDLEPDLRGRLQLMIDFMATRTAFFDEFFLAAADAGVRQVVILAAGLDARSWRLPWPDGTVVYELDQPKVLDFKSTTLREHGAQPKAELVNVPIDLRQDWPKALQEAGFDASRPAVWSAEGLVRYLPAQAQDLLFERIDALSAPGSRLASNVPDSGFTDPDRLARQREDMRRMRAAAAKLVDAEITDFDDLWYPEERTPVDSWLRERGWDVSTATFAELMARYGRSIPQGAQDSMPPTLYVSARRRAG.

Residues aspartate 132 and 161–162 (DL) contribute to the S-adenosyl-L-methionine site.

Belongs to the UPF0677 family.

In terms of biological role, exhibits S-adenosyl-L-methionine-dependent methyltransferase activity. In Mycolicibacterium paratuberculosis (strain ATCC BAA-968 / K-10) (Mycobacterium paratuberculosis), this protein is Putative S-adenosyl-L-methionine-dependent methyltransferase MAP_0256.